Reading from the N-terminus, the 136-residue chain is Large ribosomal subunit protein uL16c (136 aa).

Belongs to the universal ribosomal protein uL16 family. As to quaternary structure, part of the 50S ribosomal subunit.

The protein localises to the plastid. Its subcellular location is the chloroplast. The chain is Large ribosomal subunit protein uL16c from Chlamydomonas sp. (strain WXM).